Here is a 213-residue protein sequence, read N- to C-terminus: Probable glutathione S-transferase DHAR1, cytosolic (213 aa).

Positions 8 and 19 each coordinate glutathione. Residues lysine 8 and aspartate 19 each contribute to the L-ascorbate site. Residues 10–89 (AVGHPDTLGD…VIEEKYPTPS (80 aa)) form the GST N-terminal domain. Catalysis depends on cysteine 20, which acts as the Nucleophile. 5 residues coordinate glutathione: lysine 47, valine 60, serine 74, histidine 160, and tryptophan 207. One can recognise a GST C-terminal domain in the interval 73-213 (DSDVITQVIE…IAGWAPKVNA (141 aa)). Lysine 210 is an L-ascorbate binding site.

Belongs to the GST superfamily. DHAR family. In terms of assembly, monomer.

The protein localises to the cytoplasm. Its subcellular location is the cytosol. It catalyses the reaction RX + glutathione = an S-substituted glutathione + a halide anion + H(+). The catalysed reaction is L-dehydroascorbate + 2 glutathione = glutathione disulfide + L-ascorbate. Functionally, involved in ascorbate homeostasis. Maintains redox pools of ascorbate by recycling dihydroascorbate (DHA) to ascorbate. Involved in scavenging reactive oxygen species (ROS) under oxidative stresses. Possesses dehydroascorbate reductase (DHAR) activity in vitro. May function via a ping-pong reaction mechanism with an electron transfer at the active site. Possesses chaperone-like activity in vitro. The protein is Probable glutathione S-transferase DHAR1, cytosolic of Oryza sativa subsp. japonica (Rice).